The sequence spans 162 residues: Shikimate kinase (162 aa).

10-15 lines the ATP pocket; it reads GAGKST. Residue Ser-14 participates in Mg(2+) binding. Residues Asp-28, Arg-52, and Gly-73 each contribute to the substrate site. Arg-113 is an ATP binding site. Arg-129 serves as a coordination point for substrate.

Belongs to the shikimate kinase family. As to quaternary structure, monomer. The cofactor is Mg(2+).

Its subcellular location is the cytoplasm. It carries out the reaction shikimate + ATP = 3-phosphoshikimate + ADP + H(+). Its pathway is metabolic intermediate biosynthesis; chorismate biosynthesis; chorismate from D-erythrose 4-phosphate and phosphoenolpyruvate: step 5/7. In terms of biological role, catalyzes the specific phosphorylation of the 3-hydroxyl group of shikimic acid using ATP as a cosubstrate. The polypeptide is Shikimate kinase (Lactococcus lactis subsp. cremoris (strain MG1363)).